The primary structure comprises 240 residues: Ribosomal RNA small subunit methyltransferase G (240 aa).

Residues glycine 79, phenylalanine 84, 130–131 (AE), and arginine 149 contribute to the S-adenosyl-L-methionine site.

The protein belongs to the methyltransferase superfamily. RNA methyltransferase RsmG family.

It localises to the cytoplasm. Its function is as follows. Specifically methylates the N7 position of a guanine in 16S rRNA. In Lactobacillus acidophilus (strain ATCC 700396 / NCK56 / N2 / NCFM), this protein is Ribosomal RNA small subunit methyltransferase G.